Reading from the N-terminus, the 372-residue chain is Long-tail fiber protein gp35 (372 aa).

One can recognise a GG-type lectin domain in the interval 22–193; the sequence is NSVRYKISIA…VGATGFPRGT (172 aa).

As to quaternary structure, the long-tail fibers are trimeric, with a stoichiometry of gp34/gp37/gp36/gp35 of 3:3:3:1.

It localises to the virion. In terms of biological role, structural component of the distal-half of the long-tail fiber. The long-tail fiber of T4 is about 1600 Angstroms long with a kink in the middle that divides the fiber into proximal and distal halves. The latter hinge is probably composed of gp35 protein. This Enterobacteria phage T4 (Bacteriophage T4) protein is Long-tail fiber protein gp35 (35).